The primary structure comprises 195 residues: Nascent polypeptide-associated complex subunit alpha (195 aa).

Disordered stretches follow at residues 1–59 (MTGS…SRSE) and 132–153 (TREA…EEDS). Over residues 7-16 (TRQKEVKEPQ) the composition is skewed to basic and acidic residues. The span at 19-33 (VSDDSDNEAVEQELT) shows a compositional bias: acidic residues. The segment covering 47 to 59 (DHIDKQAKQSRSE) has biased composition (basic and acidic residues). Residues 56-121 (SRSEKKARKL…AKIEDLTQHA (66 aa)) enclose the NAC-A/B domain. Acidic residues predominate over residues 142-153 (EEDENEDVEEDS).

It belongs to the NAC-alpha family. In terms of assembly, may be part of the nascent polypeptide-associated complex (NAC), which is a heterodimer of icd-2 and icd-1 (via NAC-A/B domains).

It localises to the cytoplasm. Functionally, may prevent inappropriate targeting of non-secretory polypeptides to the endoplasmic reticulum (ER). Plays a role in the response to heat stress. This chain is Nascent polypeptide-associated complex subunit alpha, found in Caenorhabditis elegans.